Here is a 322-residue protein sequence, read N- to C-terminus: 1-aminocyclopropane-1-carboxylate oxidase 1 (322 aa).

In terms of domain architecture, Fe2OG dioxygenase spans 159–259 (PTFGTKVSSY…RMSIASFYNP (101 aa)). Residues histidine 183, aspartate 185, and histidine 240 each contribute to the Fe cation site.

It belongs to the iron/ascorbate-dependent oxidoreductase family. Fe cation is required as a cofactor.

The catalysed reaction is 1-aminocyclopropane-1-carboxylate + L-ascorbate + O2 = ethene + L-dehydroascorbate + hydrogen cyanide + CO2 + 2 H2O. It participates in alkene biosynthesis; ethylene biosynthesis via S-adenosyl-L-methionine; ethylene from S-adenosyl-L-methionine: step 2/2. In Oryza sativa subsp. japonica (Rice), this protein is 1-aminocyclopropane-1-carboxylate oxidase 1 (ACO1).